The following is a 422-amino-acid chain: Probable metallocarboxypeptidase A (422 aa).

The first 17 residues, 1-17, serve as a signal peptide directing secretion; sequence MRSVLSLALLAVNVVTA. The propeptide at 18-112 is activation peptide; it reads AVVAPFDYSG…FEAYSAGYAP (95 aa). Residues 119-419 form the Peptidase M14 domain; the sequence is SYHSYQDHLS…AGTVAMLKAV (301 aa). Zn(2+)-binding residues include histidine 179 and glutamate 182. Substrate-binding positions include 179–182, arginine 237, and 254–255; these read HARE and NR. A disulfide bond links cysteine 248 and cysteine 271. Residue histidine 309 coordinates Zn(2+). 310 to 311 is a binding site for substrate; the sequence is SY. Glutamate 385 functions as the Proton donor/acceptor in the catalytic mechanism.

The protein belongs to the peptidase M14 family. Zn(2+) is required as a cofactor.

The protein resides in the secreted. Functionally, extracellular metalloprotease that contributes to pathogenicity. The protein is Probable metallocarboxypeptidase A (MCPA) of Trichophyton verrucosum (strain HKI 0517).